The primary structure comprises 246 residues: Putative carboxymethylenebutenolidase (246 aa).

Residues Cys-127, Asp-183, and His-215 contribute to the active site.

The protein belongs to the dienelactone hydrolase family.

It carries out the reaction 2-(5-oxo-2,5-dihydrofuran-2-ylidene)acetate + H2O = 4-oxohex-2-enedioate + H(+). The chain is Putative carboxymethylenebutenolidase from Synechocystis sp. (strain ATCC 27184 / PCC 6803 / Kazusa).